The primary structure comprises 88 residues: Large ribosomal subunit protein bL31B (88 aa).

Belongs to the bacterial ribosomal protein bL31 family. Type B subfamily. As to quaternary structure, part of the 50S ribosomal subunit.

The sequence is that of Large ribosomal subunit protein bL31B from Paraburkholderia phytofirmans (strain DSM 17436 / LMG 22146 / PsJN) (Burkholderia phytofirmans).